The primary structure comprises 287 residues: Eukaryotic translation initiation factor 3 subunit F (287 aa).

Positions 12–142 (VRVHPVVLFQ…IKAYVCVSLG (131 aa)) constitute an MPN domain.

This sequence belongs to the eIF-3 subunit F family. As to quaternary structure, component of the eukaryotic translation initiation factor 3 (eIF-3) complex.

It localises to the cytoplasm. Component of the eukaryotic translation initiation factor 3 (eIF-3) complex, which is involved in protein synthesis of a specialized repertoire of mRNAs and, together with other initiation factors, stimulates binding of mRNA and methionyl-tRNAi to the 40S ribosome. The eIF-3 complex specifically targets and initiates translation of a subset of mRNAs involved in cell proliferation. In Culex quinquefasciatus (Southern house mosquito), this protein is Eukaryotic translation initiation factor 3 subunit F.